Here is a 331-residue protein sequence, read N- to C-terminus: Ketol-acid reductoisomerase (NADP(+)) (331 aa).

Positions 2 to 182 (VEIYYDDDAN…GGTRAGALRT (181 aa)) constitute a KARI N-terminal Rossmann domain. NADP(+) contacts are provided by residues 25 to 28 (FGSQ), serine 51, and serine 53. Histidine 108 is a catalytic residue. Position 134 (glycine 134) interacts with NADP(+). Residues 183–328 (TFTEETETDL…GKLRPMMSWI (146 aa)) enclose the KARI C-terminal knotted domain. 4 residues coordinate Mg(2+): aspartate 191, glutamate 195, glutamate 227, and glutamate 231. Substrate is bound at residue serine 252.

It belongs to the ketol-acid reductoisomerase family. Mg(2+) serves as cofactor.

The catalysed reaction is (2R)-2,3-dihydroxy-3-methylbutanoate + NADP(+) = (2S)-2-acetolactate + NADPH + H(+). It catalyses the reaction (2R,3R)-2,3-dihydroxy-3-methylpentanoate + NADP(+) = (S)-2-ethyl-2-hydroxy-3-oxobutanoate + NADPH + H(+). It functions in the pathway amino-acid biosynthesis; L-isoleucine biosynthesis; L-isoleucine from 2-oxobutanoate: step 2/4. Its pathway is amino-acid biosynthesis; L-valine biosynthesis; L-valine from pyruvate: step 2/4. Functionally, involved in the biosynthesis of branched-chain amino acids (BCAA). Catalyzes an alkyl-migration followed by a ketol-acid reduction of (S)-2-acetolactate (S2AL) to yield (R)-2,3-dihydroxy-isovalerate. In the isomerase reaction, S2AL is rearranged via a Mg-dependent methyl migration to produce 3-hydroxy-3-methyl-2-ketobutyrate (HMKB). In the reductase reaction, this 2-ketoacid undergoes a metal-dependent reduction by NADPH to yield (R)-2,3-dihydroxy-isovalerate. The chain is Ketol-acid reductoisomerase (NADP(+)) from Parafrankia sp. (strain EAN1pec).